We begin with the raw amino-acid sequence, 213 residues long: Germin-like protein 8-14 (213 aa).

The N-terminal stretch at 1–23 (MAKAVMMLPVLLSFLLLPFSSMA) is a signal peptide. Cys-29 and Cys-44 form a disulfide bridge. The region spanning 56-203 (HGLAAAGNTS…VTFLDDAQVK (148 aa)) is the Cupin type-1 domain. A glycan (N-linked (GlcNAc...) asparagine) is linked at Asn-63. The Mn(2+) site is built by His-104, His-106, Glu-111, and His-151.

The protein belongs to the germin family. Oligomer (believed to be a pentamer but probably hexamer). Post-translationally, phosphorylated on threonine residue.

It is found in the secreted. It localises to the extracellular space. The protein resides in the apoplast. Its function is as follows. May play a role in plant defense. Probably has no oxalate oxidase activity even if the active site is conserved. The chain is Germin-like protein 8-14 (GER5) from Oryza sativa subsp. japonica (Rice).